A 245-amino-acid polypeptide reads, in one-letter code: Type II restriction enzyme MjaIV (245 aa).

It catalyses the reaction Endonucleolytic cleavage of DNA to give specific double-stranded fragments with terminal 5'-phosphates.. A P subtype restriction enzyme that recognizes the double-stranded sequence 5'-GTNNAC-3'; the cleavage site is unknown. This is Type II restriction enzyme MjaIV (mjaIVR) from Methanocaldococcus jannaschii (strain ATCC 43067 / DSM 2661 / JAL-1 / JCM 10045 / NBRC 100440) (Methanococcus jannaschii).